A 330-amino-acid polypeptide reads, in one-letter code: Aspartate--ammonia ligase (330 aa).

This sequence belongs to the class-II aminoacyl-tRNA synthetase family. AsnA subfamily. As to quaternary structure, homodimer.

It localises to the cytoplasm. The catalysed reaction is L-aspartate + NH4(+) + ATP = L-asparagine + AMP + diphosphate + H(+). It functions in the pathway amino-acid biosynthesis; L-asparagine biosynthesis; L-asparagine from L-aspartate (ammonia route): step 1/1. The protein is Aspartate--ammonia ligase of Salmonella typhi.